Here is a 230-residue protein sequence, read N- to C-terminus: Cytidylate kinase (230 aa).

ATP is bound at residue 12–20 (GPSGTGKST).

Belongs to the cytidylate kinase family. Type 1 subfamily.

It localises to the cytoplasm. The catalysed reaction is CMP + ATP = CDP + ADP. The enzyme catalyses dCMP + ATP = dCDP + ADP. The polypeptide is Cytidylate kinase (Corynebacterium efficiens (strain DSM 44549 / YS-314 / AJ 12310 / JCM 11189 / NBRC 100395)).